The following is a 376-amino-acid chain: Cytochrome b-c1 complex subunit 2, mitochondrial (376 aa).

The N-terminal 16 residues, 1-16, are a transit peptide targeting the mitochondrion; that stretch reads MLSRVSARSYSSAAQS.

The protein belongs to the peptidase M16 family. UQCRC2/QCR2 subfamily. In terms of assembly, component of the ubiquinol-cytochrome c oxidoreductase (cytochrome b-c1 complex, complex III, CIII), a multisubunit enzyme composed of 3 respiratory subunits cytochrome b, cytochrome c1 and Rieske protein, 2 core protein subunits, and additional low-molecular weight protein subunits. The complex exists as an obligatory dimer and forms supercomplexes (SCs) in the inner mitochondrial membrane with cytochrome c oxidase (complex IV, CIV).

It localises to the mitochondrion inner membrane. Its function is as follows. Component of the ubiquinol-cytochrome c oxidoreductase, a multisubunit transmembrane complex that is part of the mitochondrial electron transport chain which drives oxidative phosphorylation. The respiratory chain contains 3 multisubunit complexes succinate dehydrogenase (complex II, CII), ubiquinol-cytochrome c oxidoreductase (cytochrome b-c1 complex, complex III, CIII) and cytochrome c oxidase (complex IV, CIV), that cooperate to transfer electrons derived from NADH and succinate to molecular oxygen, creating an electrochemical gradient over the inner membrane that drives transmembrane transport and the ATP synthase. The cytochrome b-c1 complex catalyzes electron transfer from ubiquinol to cytochrome c, linking this redox reaction to translocation of protons across the mitochondrial inner membrane, with protons being carried across the membrane as hydrogens on the quinol. In the process called Q cycle, 2 protons are consumed from the matrix, 4 protons are released into the intermembrane space and 2 electrons are passed to cytochrome c. The chain is Cytochrome b-c1 complex subunit 2, mitochondrial (QCR2) from Debaryomyces hansenii (strain ATCC 36239 / CBS 767 / BCRC 21394 / JCM 1990 / NBRC 0083 / IGC 2968) (Yeast).